A 180-amino-acid chain; its full sequence is Der GTPase-activating protein YihI (180 aa).

Disordered stretches follow at residues 1-87 and 142-180; these read MSRK…MTKQ and GLLE…DYKG. A compositionally biased stretch (basic and acidic residues) spans 23 to 32; sequence NRTESDVEGR. A compositionally biased stretch (basic residues) spans 33-43; the sequence is LRKRAKKRKGL. Positions 51-68 are enriched in basic and acidic residues; sequence EVNEQKKQSSEQNRDPRL. Residues 165-180 show a composition bias toward acidic residues; that stretch reads DLLADFDDINFDDYKG.

The protein belongs to the YihI family. In terms of assembly, interacts with Der.

Its function is as follows. A GTPase-activating protein (GAP) that modifies Der/EngA GTPase function. May play a role in ribosome biogenesis. The chain is Der GTPase-activating protein YihI from Vibrio parahaemolyticus serotype O3:K6 (strain RIMD 2210633).